Consider the following 120-residue polypeptide: Putative ferric transport system permease-like protein AfuB (120 aa).

Residues 1–38 lie on the Cytoplasmic side of the membrane; that stretch reads MESLPGQIDKSLDEASLSLRAGSLRTITHILLPLLRPA. One can recognise an ABC transmembrane type-1 domain in the interval 1-102; the sequence is MESLPGQIDK…VVMLAIIFIF (102 aa). Residues 39–59 form a helical membrane-spanning segment; the sequence is ILSALIYSFVRAITTVSAIVF. The Periplasmic portion of the chain corresponds to 60 to 81; that stretch reads LVTPDTRVATAYILNRVEDGEY. Residues 82–102 form a helical membrane-spanning segment; the sequence is GVAIAYGSILIVVMLAIIFIF. The Cytoplasmic segment spans residues 103–120; the sequence is DWLIGESRTSRSKAKNQA.

This sequence belongs to the binding-protein-dependent transport system permease family. FbpB subfamily.

It is found in the cell inner membrane. Functionally, a severely truncated paralog of the AfuB uptake protein, homologous only to the last 20% of the intact protein in Actinobacillus. This is Putative ferric transport system permease-like protein AfuB (afuB) from Escherichia coli (strain K12).